The following is a 275-amino-acid chain: Dermonecrotic toxin LhSicTox-alphaVI1i (275 aa).

Residue H5 is part of the active site. The Mg(2+) site is built by E25 and D27. The active-site Nucleophile is the H41. 2 disulfides stabilise this stretch: C45–C51 and C47–C192. D85 provides a ligand contact to Mg(2+).

This sequence belongs to the arthropod phospholipase D family. Class II subfamily. Mg(2+) serves as cofactor. Expressed by the venom gland.

The protein localises to the secreted. It carries out the reaction an N-(acyl)-sphingosylphosphocholine = an N-(acyl)-sphingosyl-1,3-cyclic phosphate + choline. It catalyses the reaction an N-(acyl)-sphingosylphosphoethanolamine = an N-(acyl)-sphingosyl-1,3-cyclic phosphate + ethanolamine. The enzyme catalyses a 1-acyl-sn-glycero-3-phosphocholine = a 1-acyl-sn-glycero-2,3-cyclic phosphate + choline. The catalysed reaction is a 1-acyl-sn-glycero-3-phosphoethanolamine = a 1-acyl-sn-glycero-2,3-cyclic phosphate + ethanolamine. Dermonecrotic toxins cleave the phosphodiester linkage between the phosphate and headgroup of certain phospholipids (sphingolipid and lysolipid substrates), forming an alcohol (often choline) and a cyclic phosphate. This toxin acts on sphingomyelin (SM). It may also act on ceramide phosphoethanolamine (CPE), lysophosphatidylcholine (LPC) and lysophosphatidylethanolamine (LPE), but not on lysophosphatidylserine (LPS), and lysophosphatidylglycerol (LPG). It acts by transphosphatidylation, releasing exclusively cyclic phosphate products as second products. Induces dermonecrosis, hemolysis, increased vascular permeability, edema, inflammatory response, and platelet aggregation. The sequence is that of Dermonecrotic toxin LhSicTox-alphaVI1i from Loxosceles hirsuta (Recluse spider).